We begin with the raw amino-acid sequence, 344 residues long: Phosphoribosylformylglycinamidine cyclo-ligase (344 aa).

Belongs to the AIR synthase family.

The protein resides in the cytoplasm. It carries out the reaction 2-formamido-N(1)-(5-O-phospho-beta-D-ribosyl)acetamidine + ATP = 5-amino-1-(5-phospho-beta-D-ribosyl)imidazole + ADP + phosphate + H(+). Its pathway is purine metabolism; IMP biosynthesis via de novo pathway; 5-amino-1-(5-phospho-D-ribosyl)imidazole from N(2)-formyl-N(1)-(5-phospho-D-ribosyl)glycinamide: step 2/2. This is Phosphoribosylformylglycinamidine cyclo-ligase from Anaeromyxobacter sp. (strain Fw109-5).